We begin with the raw amino-acid sequence, 2312 residues long: Protein Ycf2 (2312 aa).

Gly-1630–Ser-1637 lines the ATP pocket.

This sequence belongs to the Ycf2 family.

It is found in the plastid. The protein resides in the chloroplast stroma. Probable ATPase of unknown function. Its presence in a non-photosynthetic plant (Epifagus virginiana) and experiments in tobacco indicate that it has an essential function which is probably not related to photosynthesis. This is Protein Ycf2 from Manihot esculenta (Cassava).